Here is a 492-residue protein sequence, read N- to C-terminus: Glutamyl-tRNA(Gln) amidotransferase subunit A (492 aa).

Residues K77 and S152 each act as charge relay system in the active site. Catalysis depends on S176, which acts as the Acyl-ester intermediate.

The protein belongs to the amidase family. GatA subfamily. As to quaternary structure, heterotrimer of A, B and C subunits.

It carries out the reaction L-glutamyl-tRNA(Gln) + L-glutamine + ATP + H2O = L-glutaminyl-tRNA(Gln) + L-glutamate + ADP + phosphate + H(+). In terms of biological role, allows the formation of correctly charged Gln-tRNA(Gln) through the transamidation of misacylated Glu-tRNA(Gln) in organisms which lack glutaminyl-tRNA synthetase. The reaction takes place in the presence of glutamine and ATP through an activated gamma-phospho-Glu-tRNA(Gln). The protein is Glutamyl-tRNA(Gln) amidotransferase subunit A (gatA) of Chlamydia pneumoniae (Chlamydophila pneumoniae).